Reading from the N-terminus, the 619-residue chain is Putative zinc metalloprotease CT_072 (619 aa).

Zn(2+) is bound at residue histidine 20. Glutamate 21 is an active-site residue. Position 24 (histidine 24) interacts with Zn(2+). The next 3 membrane-spanning stretches (helical) occupy residues 103-125 (IFVL…GILY), 558-580 (VLNL…WEIL), and 593-610 (ALVP…FLTL).

This sequence belongs to the peptidase M50B family. Requires Zn(2+) as cofactor.

The protein localises to the cell inner membrane. This chain is Putative zinc metalloprotease CT_072, found in Chlamydia trachomatis serovar D (strain ATCC VR-885 / DSM 19411 / UW-3/Cx).